A 252-amino-acid polypeptide reads, in one-letter code: Neurexophilin-3 (252 aa).

An N-terminal signal peptide occupies residues 1 to 22 (MQLTRCCFVFLVQGSLYLVICG). The II stretch occupies residues 23-75 (QDDGPPGSEDPEHDDHEGQPRPRVPRKRGHISPKSRPLANSTLLGLLAPPGEV). Residues 27–59 (PPGSEDPEHDDHEGQPRPRVPRKRGHISPKSRP) form a disordered region. Residues 45 to 55 (RVPRKRGHISP) show a composition bias toward basic residues. Residues asparagine 62, asparagine 127, asparagine 137, and asparagine 143 are each glycosylated (N-linked (GlcNAc...) asparagine). The III stretch occupies residues 76 to 157 (WGVLGQPPNR…LVPPSKAVEF (82 aa)). An IV (linker domain) region spans residues 158-166 (HQEQQIFIE). Residues 167–252 (AKASKIFNCR…HSDTPYYPSG (86 aa)) are v (Cys-rich).

The protein belongs to the neurexophilin family. Post-translationally, may be proteolytically processed at the boundary between the N-terminal non-conserved and the central conserved domain in neuron-like cells. In terms of tissue distribution, highest level in brain, present also in lung, kidney and testis.

It is found in the secreted. Its function is as follows. May be signaling molecules that resemble neuropeptides. Ligand for alpha-neurexins. This chain is Neurexophilin-3 (Nxph3), found in Mus musculus (Mouse).